The primary structure comprises 90 residues: Protein RALF-like 3 (90 aa).

An N-terminal signal peptide occupies residues 1-29; it reads MSNLRGTNRFILVAVLVSFVFLSIMNAEA. Intrachain disulfides connect Cys59/Cys67 and Cys80/Cys86.

Belongs to the plant rapid alkalinization factor (RALF) family.

The protein resides in the secreted. In terms of biological role, cell signaling peptide that may regulate plant stress, growth, and development. Mediates a rapid alkalinization of extracellular space by mediating a transient increase in the cytoplasmic Ca(2+) concentration leading to a calcium-dependent signaling events through a cell surface receptor and a concomitant activation of some intracellular mitogen-activated protein kinases. The polypeptide is Protein RALF-like 3 (RALFL3) (Arabidopsis thaliana (Mouse-ear cress)).